We begin with the raw amino-acid sequence, 447 residues long: MLMNLPEILKNQKARARKFKPVKMSKRTELWYRQQLKQFVKMMTNDVERALQQPQGSFFMDDAKGFQAISAKALMKVLEKYEKSDRTSQAENIANGFVSRGDAQNHAEVSTNLKNQTGIDLSAYLRNSPNITEKVNALTAGNIQLIKSIRSQYLDKVQNAVMQAMVRGSLNKDLAAQIKDLGKTTEKRAMFIARDQSSKLNAALTQARHEEVGIKKYMWSASLDERVRESHAEKDGQIFEYANPPADTDHPGHDFNCRCVQIPVLDNNEQIVKNSPIVSQQEKQQMRSEWSDDFPDTIIDRKLGDATSHPLYENAKKGSIEDAYQLAKDLVTDDAVNKLKQLVGNKNAILIPVHAEEAVGQNMIPVAIATVLSKKLHIPVDLSIVQATKVSRTGGDGWHRLVYSPAFDGIVPKDKYAIILDDTQTQGGTLASLKGYIIKEKLLHLML.

This sequence to E.coli plasmid IncP-alpha RP4 protein TraN.

This is an uncharacterized protein from Haemophilus influenzae (strain ATCC 51907 / DSM 11121 / KW20 / Rd).